The chain runs to 179 residues: Large ribosomal subunit protein uL6 (179 aa).

Belongs to the universal ribosomal protein uL6 family. In terms of assembly, part of the 50S ribosomal subunit.

Functionally, this protein binds to the 23S rRNA, and is important in its secondary structure. It is located near the subunit interface in the base of the L7/L12 stalk, and near the tRNA binding site of the peptidyltransferase center. In Clostridium novyi (strain NT), this protein is Large ribosomal subunit protein uL6.